Consider the following 955-residue polypeptide: MLKLLLGDPNARKLKRYQPIVSDINLLEEEVSPLSDDDLRRRTAEFRQRLDNAGSLDQQRPVLDELLPEAFAVVREAGKRVLGMRHFDVQLIGGMVLHEGQIAEMKTGEGKTLVATLPSFLNALTGRGVHVVTVNDYLARRDAEWMGQVHRFLGLSVGLIQQDMTPAERRRNYGCDITYATNSELGFDYLRDNMAADINEVVQREFQYCVIDEVDSILIDEARTPLIISGQVERPQEKYQKAAEVAAALTRAAEMGKDGIDPEGDYEVDEKQRSCTLTDEGFAKAEQMIGVADLYDPQDPWAHYITNALKAKDLFTRDVNYIVRDGEAVIVDEFTGRVMPGRRWSDGQHQAIEAKEALAIQPETQTLASITYQNFFLLYPRLAGMTGTAKTEETEFEKTYKLETTIVPTNRVRARQDWVDQVYKTEEAKWRAVAKETAEVHQQGRPVLVGTTSVEKSELLSALLAEEDIPHNLLNAKPENVEREAEIVAQAGRSGAVTIATNMAGRGTDIILGGNSDYMARLKLREVLLSRLVRPEEGHRPPVPLQRSGAEGGGGFAAKAAPASGPHGHAPSEARAIGSLYPCQLTEDTDQALADLAKDLVKAWGDRALTVIELEDHIATAAEKAPTDDPAIAALRAAIARVKGEYDDVVKQEEQRVREAGGLHVIGTERHESRRVDNQLRGRAGRQGDPGSTRFFLSLGDNLLRIFGGDRVAGLMNAFRVEEDMPIESGMLTRSLEGAQKKVETYYYDIRKQVFEYDEVMNNQRKAVYSERRRVLEGRELKKQVVGYGERTMNEIVEAYVNPDLPPEEWDVTQLVSKVQEFVYLLDDLQADQLQGLSMDELKAFLQEQLRNAYDLKEGQIEDQRPGLMREAERFFILQQIDTLWREHLQSMDALRESVGLRGYGQKDPLIEYKNEGYDMFLDMMTNMRRNVIYSMFMFQPAPPAGQSAGQRTTA.

Residues Gln90, 108-112 (GEGKT), and Asp509 each bind ATP. Positions 537–571 (EGHRPPVPLQRSGAEGGGGFAAKAAPASGPHGHAP) are disordered. Low complexity predominate over residues 557–571 (AAKAAPASGPHGHAP).

The protein belongs to the SecA family. As to quaternary structure, monomer and homodimer. Part of the essential Sec protein translocation apparatus which comprises SecA, SecYEG and auxiliary proteins SecDF. Other proteins may also be involved.

It localises to the cell inner membrane. It is found in the cellular thylakoid membrane. Its subcellular location is the cytoplasm. It carries out the reaction ATP + H2O + cellular proteinSide 1 = ADP + phosphate + cellular proteinSide 2.. Functionally, part of the Sec protein translocase complex. Interacts with the SecYEG preprotein conducting channel. Has a central role in coupling the hydrolysis of ATP to the transfer of proteins into and across the cell membrane, serving as an ATP-driven molecular motor driving the stepwise translocation of polypeptide chains across the membrane. Probably participates in protein translocation into and across both the cytoplasmic and thylakoid membranes in cyanobacterial cells. This chain is Protein translocase subunit SecA, found in Synechococcus sp. (strain WH7803).